Here is a 317-residue protein sequence, read N- to C-terminus: Peroxidase 22.3 (317 aa).

The signal sequence occupies residues 1–25; it reads MASATNSSLSLMLLVAAAMASVASA. The residue at position 26 (Gln-26) is a Pyrrolidone carboxylic acid. 2 disulfide bridges follow: Cys-36–Cys-111 and Cys-69–Cys-74. Catalysis depends on His-67, which acts as the Proton acceptor. The Ca(2+) site is built by Asp-68, Val-71, Gly-73, Asp-75, and Ser-77. N-linked (GlcNAc...) asparagine glycosylation is present at Asn-112. 2 disulfides stabilise this stretch: Cys-117–Cys-312 and Cys-196–Cys-221. A substrate-binding site is contributed by Pro-159. N-linked (GlcNAc...) asparagine glycosylation occurs at Asn-171. His-189 contributes to the heme b binding site. Ca(2+) is bound at residue Thr-190. Residue Asn-205 is glycosylated (N-linked (GlcNAc...) asparagine). 3 residues coordinate Ca(2+): Asp-236, Thr-239, and Asp-244.

This sequence belongs to the peroxidase family. Classical plant (class III) peroxidase subfamily. The cofactor is heme b. Ca(2+) is required as a cofactor.

Its subcellular location is the secreted. It carries out the reaction H2O2 + AH2 = A + 2 H2O. In terms of biological role, removal of H(2)O(2), oxidation of toxic reductants, biosynthesis and degradation of lignin, suberization, auxin catabolism, response to environmental stresses such as wounding, pathogen attack and oxidative stress. These functions might be dependent on each isozyme/isoform in each plant tissue. This Oryza sativa subsp. japonica (Rice) protein is Peroxidase 22.3.